A 65-amino-acid chain; its full sequence is Large ribosomal subunit protein bL35 (65 aa).

The protein belongs to the bacterial ribosomal protein bL35 family.

In Acetivibrio thermocellus (strain ATCC 27405 / DSM 1237 / JCM 9322 / NBRC 103400 / NCIMB 10682 / NRRL B-4536 / VPI 7372) (Clostridium thermocellum), this protein is Large ribosomal subunit protein bL35.